A 208-amino-acid chain; its full sequence is Ribosomal RNA large subunit methyltransferase E (208 aa).

S-adenosyl-L-methionine is bound by residues Gly61, Trp63, Asp81, Asp97, and Asp122. Catalysis depends on Lys162, which acts as the Proton acceptor.

Belongs to the class I-like SAM-binding methyltransferase superfamily. RNA methyltransferase RlmE family.

The protein resides in the cytoplasm. It catalyses the reaction uridine(2552) in 23S rRNA + S-adenosyl-L-methionine = 2'-O-methyluridine(2552) in 23S rRNA + S-adenosyl-L-homocysteine + H(+). In terms of biological role, specifically methylates the uridine in position 2552 of 23S rRNA at the 2'-O position of the ribose in the fully assembled 50S ribosomal subunit. This Pseudomonas putida (strain W619) protein is Ribosomal RNA large subunit methyltransferase E.